The chain runs to 118 residues: Ribosome-binding factor A (118 aa).

Belongs to the RbfA family. As to quaternary structure, monomer. Binds 30S ribosomal subunits, but not 50S ribosomal subunits or 70S ribosomes.

Its subcellular location is the cytoplasm. Its function is as follows. One of several proteins that assist in the late maturation steps of the functional core of the 30S ribosomal subunit. Associates with free 30S ribosomal subunits (but not with 30S subunits that are part of 70S ribosomes or polysomes). Required for efficient processing of 16S rRNA. May interact with the 5'-terminal helix region of 16S rRNA. This is Ribosome-binding factor A from Bacillus cereus (strain AH187).